A 28-amino-acid chain; its full sequence is Sarcolamban A (28 aa).

A helical membrane pass occupies residues 7–27 (LFTTFGILAILLFFLYLIYAV).

As to quaternary structure, interacts with SERCA. In terms of tissue distribution, strongly expressed in embryonic and larval somatic muscles and postembryonic heart.

Its subcellular location is the sarcoplasmic reticulum membrane. The protein resides in the cell membrane. It localises to the sarcolemma. The protein localises to the T-tubule. Functionally, plays an essential role in the regulation of calcium transport at the sarcoplasmic reticulum (SR), which is secondarily required for regular muscle contraction. This chain is Sarcolamban A, found in Drosophila melanogaster (Fruit fly).